The primary structure comprises 1061 residues: Isoleucine--tRNA ligase (1061 aa).

The 'HIGH' region signature appears at 50–60 (PYTSGSAHMGT). The 'KMSKS' region motif lies at 604–608 (KMSKS). Lys607 is an ATP binding site.

It belongs to the class-I aminoacyl-tRNA synthetase family. IleS type 2 subfamily. In terms of assembly, monomer. Requires Zn(2+) as cofactor.

Its subcellular location is the cytoplasm. The catalysed reaction is tRNA(Ile) + L-isoleucine + ATP = L-isoleucyl-tRNA(Ile) + AMP + diphosphate. Functionally, catalyzes the attachment of isoleucine to tRNA(Ile). As IleRS can inadvertently accommodate and process structurally similar amino acids such as valine, to avoid such errors it has two additional distinct tRNA(Ile)-dependent editing activities. One activity is designated as 'pretransfer' editing and involves the hydrolysis of activated Val-AMP. The other activity is designated 'posttransfer' editing and involves deacylation of mischarged Val-tRNA(Ile). The polypeptide is Isoleucine--tRNA ligase (Natronomonas pharaonis (strain ATCC 35678 / DSM 2160 / CIP 103997 / JCM 8858 / NBRC 14720 / NCIMB 2260 / Gabara) (Halobacterium pharaonis)).